We begin with the raw amino-acid sequence, 125 residues long: uncharacterized protein (125 aa).

The next 4 membrane-spanning stretches (helical) occupy residues 9-29, 33-53, 56-76, and 100-120; these read IANA…TLTG, GEKT…NMVV, IVQV…TLVV, and FWTA…LNAF.

It is found in the cell membrane. This is an uncharacterized protein from Streptomyces coelicolor (strain ATCC BAA-471 / A3(2) / M145).